Here is a 187-residue protein sequence, read N- to C-terminus: Putative manganese efflux pump MntP (187 aa).

A run of 6 helical transmembrane segments spans residues 3-23 (MSAT…ASIG), 41-61 (LIFG…GFFA), 62-82 (SQYI…ILGG), 107-129 (LLVC…LAFL), 143-163 (ATMI…PILG), and 166-186 (AEII…YEHL).

The protein belongs to the MntP (TC 9.B.29) family.

The protein resides in the cell inner membrane. Its function is as follows. Probably functions as a manganese efflux pump. The protein is Putative manganese efflux pump MntP of Pectobacterium atrosepticum (strain SCRI 1043 / ATCC BAA-672) (Erwinia carotovora subsp. atroseptica).